The following is an 839-amino-acid chain: Probable alpha-glucuronidase A (839 aa).

Residues 1 to 18 form the signal peptide; the sequence is MRWSFLTVLLWLVSLTGA. 12 N-linked (GlcNAc...) asparagine glycosylation sites follow: Asn-49, Asn-101, Asn-148, Asn-221, Asn-278, Asn-309, Asn-342, Asn-464, Asn-526, Asn-575, Asn-681, and Asn-731.

This sequence belongs to the glycosyl hydrolase 67 family.

The protein localises to the secreted. The catalysed reaction is an alpha-D-glucuronoside + H2O = D-glucuronate + an alcohol. Its function is as follows. Alpha-glucuronidase involved in the hydrolysis of xylan, a major structural heterogeneous polysaccharide found in plant biomass representing the second most abundant polysaccharide in the biosphere, after cellulose. Releases 4-O-methylglucuronic acid from xylan. In Aspergillus flavus (strain ATCC 200026 / FGSC A1120 / IAM 13836 / NRRL 3357 / JCM 12722 / SRRC 167), this protein is Probable alpha-glucuronidase A (aguA).